We begin with the raw amino-acid sequence, 114 residues long: uncharacterized protein (114 aa).

Cysteine 10 is an active-site residue.

It belongs to the ArsC family.

This is an uncharacterized protein from Haemophilus influenzae (strain ATCC 51907 / DSM 11121 / KW20 / Rd).